The sequence spans 329 residues: Ribosomal RNA small subunit methyltransferase H (329 aa).

S-adenosyl-L-methionine is bound by residues 47–49 (GGH), Asp-67, Phe-93, Asp-115, and Gln-122.

Belongs to the methyltransferase superfamily. RsmH family.

The protein resides in the cytoplasm. It catalyses the reaction cytidine(1402) in 16S rRNA + S-adenosyl-L-methionine = N(4)-methylcytidine(1402) in 16S rRNA + S-adenosyl-L-homocysteine + H(+). Functionally, specifically methylates the N4 position of cytidine in position 1402 (C1402) of 16S rRNA. In Blochmanniella pennsylvanica (strain BPEN), this protein is Ribosomal RNA small subunit methyltransferase H.